Here is a 235-residue protein sequence, read N- to C-terminus: Riboflavin kinase (235 aa).

Threonine 45 and asparagine 47 together coordinate Mg(2+). Glutamate 140 (nucleophile) is an active-site residue.

Belongs to the flavokinase family. Requires Zn(2+) as cofactor. Mg(2+) is required as a cofactor.

The enzyme catalyses riboflavin + ATP = FMN + ADP + H(+). It functions in the pathway cofactor biosynthesis; FMN biosynthesis; FMN from riboflavin (ATP route): step 1/1. In terms of biological role, catalyzes the phosphorylation of riboflavin (vitamin B2) to form flavin mononucleotide (FMN) coenzyme. In Chaetomium globosum (strain ATCC 6205 / CBS 148.51 / DSM 1962 / NBRC 6347 / NRRL 1970) (Soil fungus), this protein is Riboflavin kinase (FMN1).